We begin with the raw amino-acid sequence, 299 residues long: Ribosomal protein uL3 glutamine methyltransferase (299 aa).

This sequence belongs to the protein N5-glutamine methyltransferase family. PrmB subfamily.

It catalyses the reaction L-glutaminyl-[ribosomal protein uL3] + S-adenosyl-L-methionine = N(5)-methyl-L-glutaminyl-[ribosomal protein uL3] + S-adenosyl-L-homocysteine + H(+). Methylates large ribosomal subunit protein uL3 on a specific glutamine residue. This Neisseria gonorrhoeae (strain ATCC 700825 / FA 1090) protein is Ribosomal protein uL3 glutamine methyltransferase.